The sequence spans 146 residues: Large ribosomal subunit protein uL13 (146 aa).

The protein belongs to the universal ribosomal protein uL13 family. Part of the 50S ribosomal subunit.

In terms of biological role, this protein is one of the early assembly proteins of the 50S ribosomal subunit, although it is not seen to bind rRNA by itself. It is important during the early stages of 50S assembly. The polypeptide is Large ribosomal subunit protein uL13 (Spiroplasma citri).